The chain runs to 157 residues: Pyruvoyl-dependent arginine decarboxylase 1 (157 aa).

Ser-41 bears the Pyruvic acid (Ser) mark.

The protein belongs to the PdaD family. Pyruvate serves as cofactor.

It carries out the reaction L-arginine + H(+) = agmatine + CO2. This Archaeoglobus fulgidus (strain ATCC 49558 / DSM 4304 / JCM 9628 / NBRC 100126 / VC-16) protein is Pyruvoyl-dependent arginine decarboxylase 1 (pdaD1).